The sequence spans 62 residues: Photosystem II reaction center protein Z (62 aa).

A run of 2 helical transmembrane segments spans residues 8-28 (AVFA…VVFA) and 41-61 (FSGT…NSLI).

It belongs to the PsbZ family. As to quaternary structure, PSII is composed of 1 copy each of membrane proteins PsbA, PsbB, PsbC, PsbD, PsbE, PsbF, PsbH, PsbI, PsbJ, PsbK, PsbL, PsbM, PsbT, PsbY, PsbZ, Psb30/Ycf12, at least 3 peripheral proteins of the oxygen-evolving complex and a large number of cofactors. It forms dimeric complexes.

Its subcellular location is the plastid. The protein resides in the chloroplast thylakoid membrane. Functionally, may control the interaction of photosystem II (PSII) cores with the light-harvesting antenna, regulates electron flow through the 2 photosystem reaction centers. PSII is a light-driven water plastoquinone oxidoreductase, using light energy to abstract electrons from H(2)O, generating a proton gradient subsequently used for ATP formation. This Amborella trichopoda protein is Photosystem II reaction center protein Z.